Here is a 345-residue protein sequence, read N- to C-terminus: High mobility group protein 20A (345 aa).

2 disordered regions span residues 1 to 124 (MENT…TERP) and 167 to 198 (QYQNTDAYQTYSRKAQSRQKGRQQRQEGVRGV). 2 stretches are compositionally biased toward polar residues: residues 32 to 48 (LSGSSQAPFHPQSPTLQ) and 57 to 67 (LQQSGEQQLGN). Residues 80–94 (TRRGGWTKGRKRKRS) show a composition bias toward basic residues. Positions 101–169 (PKAPLTGYVR…RYTKELQQYQ (69 aa)) form a DNA-binding region, HMG box. A compositionally biased stretch (basic and acidic residues) spans 112–124 (MNERREQLRTERP). Positions 167-180 (QYQNTDAYQTYSRK) are enriched in polar residues. Residues 227-290 (SKAREAELRQ…QHLQSVRQAL (64 aa)) are a coiled coil.

The protein localises to the nucleus. Its function is as follows. Plays a role in neuronal differentiation. This chain is High mobility group protein 20A (hmg20a), found in Xenopus tropicalis (Western clawed frog).